Consider the following 455-residue polypeptide: Ribulose bisphosphate carboxylase large chain (455 aa).

Position 5 is an N6,N6,N6-trimethyllysine (K5). Residues N114 and T164 each coordinate substrate. K166 (proton acceptor) is an active-site residue. A substrate-binding site is contributed by K168. The Mg(2+) site is built by K192, D194, and E195. K192 is subject to N6-carboxylysine. H285 acts as the Proton acceptor in catalysis. Substrate contacts are provided by R286, H318, and S370.

This sequence belongs to the RuBisCO large chain family. Type I subfamily. Heterohexadecamer of 8 large chains and 8 small chains; disulfide-linked. The disulfide link is formed within the large subunit homodimers. The cofactor is Mg(2+). Post-translationally, the disulfide bond which can form in the large chain dimeric partners within the hexadecamer appears to be associated with oxidative stress and protein turnover.

The protein resides in the plastid. Its subcellular location is the chloroplast. The catalysed reaction is 2 (2R)-3-phosphoglycerate + 2 H(+) = D-ribulose 1,5-bisphosphate + CO2 + H2O. The enzyme catalyses D-ribulose 1,5-bisphosphate + O2 = 2-phosphoglycolate + (2R)-3-phosphoglycerate + 2 H(+). Its function is as follows. RuBisCO catalyzes two reactions: the carboxylation of D-ribulose 1,5-bisphosphate, the primary event in carbon dioxide fixation, as well as the oxidative fragmentation of the pentose substrate in the photorespiration process. Both reactions occur simultaneously and in competition at the same active site. This chain is Ribulose bisphosphate carboxylase large chain, found in Lupinus albus (White lupine).